Here is a 37-residue protein sequence, read N- to C-terminus: NADH dehydrogenase [ubiquinone] 1 alpha subcomplex subunit 5 (37 aa).

Belongs to the complex I NDUFA5 subunit family. In terms of assembly, complex I is composed of about 45 different subunits.

The protein resides in the mitochondrion inner membrane. In terms of biological role, accessory subunit of the mitochondrial membrane respiratory chain NADH dehydrogenase (Complex I), that is believed not to be involved in catalysis. Complex I functions in the transfer of electrons from NADH to the respiratory chain. The immediate electron acceptor for the enzyme is believed to be ubiquinone. In Solanum tuberosum (Potato), this protein is NADH dehydrogenase [ubiquinone] 1 alpha subcomplex subunit 5.